The following is a 447-amino-acid chain: 3-O-methyltransferase 2 (447 aa).

Residues 264 to 265 (GG), D287, 318 to 319 (DF), and R334 each bind S-adenosyl-L-methionine. H338 serves as the catalytic Proton acceptor.

The protein belongs to the class I-like SAM-binding methyltransferase superfamily. Cation-independent O-methyltransferase family. COMT subfamily.

Its function is as follows. S-adenosyl-L-methionine-dependent methyltransferase that preferentially catalyzes the methylation of 3-OH phenolic compounds like isovanillic acid and 3-OH-4-Met cinnamic acid. May play a role in promoting lignin degradation by methylating and inactivating free-hydroxyl phenolic compounds, products of lignin cleavage which are known inhibitors of lignin peroxidases. In Phanerochaete chrysosporium (strain RP-78 / ATCC MYA-4764 / FGSC 9002) (White-rot fungus), this protein is 3-O-methyltransferase 2.